The chain runs to 184 residues: Acireductone dioxygenase 4 (184 aa).

Positions 86, 88, 92, and 131 each coordinate Fe(2+). Residues histidine 86, histidine 88, glutamate 92, and histidine 131 each contribute to the Ni(2+) site.

It belongs to the acireductone dioxygenase (ARD) family. Requires Fe(2+) as cofactor. Ni(2+) is required as a cofactor.

It is found in the cytoplasm. Its subcellular location is the nucleus. The enzyme catalyses 1,2-dihydroxy-5-(methylsulfanyl)pent-1-en-3-one + O2 = 4-methylsulfanyl-2-oxobutanoate + formate + 2 H(+). The catalysed reaction is 1,2-dihydroxy-5-(methylsulfanyl)pent-1-en-3-one + O2 = 3-(methylsulfanyl)propanoate + CO + formate + 2 H(+). It participates in amino-acid biosynthesis; L-methionine biosynthesis via salvage pathway; L-methionine from S-methyl-5-thio-alpha-D-ribose 1-phosphate: step 5/6. Catalyzes 2 different reactions between oxygen and the acireductone 1,2-dihydroxy-3-keto-5-methylthiopentene (DHK-MTPene) depending upon the metal bound in the active site. Fe-containing acireductone dioxygenase (Fe-ARD) produces formate and 2-keto-4-methylthiobutyrate (KMTB), the alpha-ketoacid precursor of methionine in the methionine recycle pathway. Ni-containing acireductone dioxygenase (Ni-ARD) produces methylthiopropionate, carbon monoxide and formate, and does not lie on the methionine recycle pathway. In Oryza sativa subsp. japonica (Rice), this protein is Acireductone dioxygenase 4 (ARD4).